Here is a 313-residue protein sequence, read N- to C-terminus: Acetyl-coenzyme A carboxylase carboxyl transferase subunit beta (313 aa).

Residues 24-293 (LWIKCPDSGQ…LETASKSVQP (270 aa)) enclose the CoA carboxyltransferase N-terminal domain.

Belongs to the AccD/PCCB family. In terms of assembly, acetyl-CoA carboxylase is a heterohexamer composed of biotin carboxyl carrier protein (AccB), biotin carboxylase (AccC) and two subunits each of ACCase subunit alpha (AccA) and ACCase subunit beta (AccD).

Its subcellular location is the cytoplasm. It catalyses the reaction N(6)-carboxybiotinyl-L-lysyl-[protein] + acetyl-CoA = N(6)-biotinyl-L-lysyl-[protein] + malonyl-CoA. It participates in lipid metabolism; malonyl-CoA biosynthesis; malonyl-CoA from acetyl-CoA: step 1/1. Functionally, component of the acetyl coenzyme A carboxylase (ACC) complex. Biotin carboxylase (BC) catalyzes the carboxylation of biotin on its carrier protein (BCCP) and then the CO(2) group is transferred by the transcarboxylase to acetyl-CoA to form malonyl-CoA. The protein is Acetyl-coenzyme A carboxylase carboxyl transferase subunit beta of Bradyrhizobium diazoefficiens (strain JCM 10833 / BCRC 13528 / IAM 13628 / NBRC 14792 / USDA 110).